The following is a 201-amino-acid chain: MTVFMSDIRMAAQGGPGFGNDVFDRLLSERIIFLGSQVDDEIANKLCAQILLLSAEDPTRDISLYINSPGGSVTAGMAIYDTMKYSPCDIATYGMGLAASMGQFLLSGGTKGKRFALPHARIMMHQPSAGVGGTAADIAIQAEQFAATKREMAQLIAEHTGQTFEQISKDSDRDRWFTAQEAKDYGLVDHVITLAEGPISN.

Ser100 (nucleophile) is an active-site residue. Residue His125 is part of the active site.

It belongs to the peptidase S14 family. In terms of assembly, fourteen ClpP subunits assemble into 2 heptameric rings which stack back to back to give a disk-like structure with a central cavity, resembling the structure of eukaryotic proteasomes.

It localises to the cytoplasm. It carries out the reaction Hydrolysis of proteins to small peptides in the presence of ATP and magnesium. alpha-casein is the usual test substrate. In the absence of ATP, only oligopeptides shorter than five residues are hydrolyzed (such as succinyl-Leu-Tyr-|-NHMec, and Leu-Tyr-Leu-|-Tyr-Trp, in which cleavage of the -Tyr-|-Leu- and -Tyr-|-Trp bonds also occurs).. In terms of biological role, cleaves peptides in various proteins in a process that requires ATP hydrolysis. Has a chymotrypsin-like activity. Plays a major role in the degradation of misfolded proteins. This chain is ATP-dependent Clp protease proteolytic subunit 2, found in Corynebacterium glutamicum (strain ATCC 13032 / DSM 20300 / JCM 1318 / BCRC 11384 / CCUG 27702 / LMG 3730 / NBRC 12168 / NCIMB 10025 / NRRL B-2784 / 534).